Here is a 213-residue protein sequence, read N- to C-terminus: MFPLSLVQPSHSPLCPCSQPALTLWPATRLIFGHLEDDILSMRNDMERRMQRVNEACRLLSKDTEMRRITDQNRQSRESEGTSPNSGKDGKDHFELTLNVRDFSPHELTVKTQGRRVIVTGKHERKSDTEDGNYFHEYREWKREAELPESVNPEQVVCSLSKNGHLHIQAPRLALPPAPETPIPISMDTAPRDAQELPPDAQTSNAEGDQKVD.

The span at 61 to 80 shows a compositional bias: basic and acidic residues; it reads SKDTEMRRITDQNRQSRESE. 2 disordered regions span residues 61–93 and 174–213; these read SKDT…GKDH and ALPP…QKVD. Residues 76 to 188 form the sHSP domain; that stretch reads SRESEGTSPN…PETPIPISMD (113 aa).

This sequence belongs to the small heat shock protein (HSP20) family.

The chain is Heat shock protein 30C (hsp30c) from Xenopus laevis (African clawed frog).